A 277-amino-acid polypeptide reads, in one-letter code: Large ribosomal subunit protein uL2 (277 aa).

The tract at residues 219–277 (TVRGSVMNPNDHPHGGGEGKAPVGRKAPSTPWGKPALGLKTRNKKAKSDKLIVRRRNQK) is disordered.

It belongs to the universal ribosomal protein uL2 family. In terms of assembly, part of the 50S ribosomal subunit. Forms a bridge to the 30S subunit in the 70S ribosome.

In terms of biological role, one of the primary rRNA binding proteins. Required for association of the 30S and 50S subunits to form the 70S ribosome, for tRNA binding and peptide bond formation. It has been suggested to have peptidyltransferase activity; this is somewhat controversial. Makes several contacts with the 16S rRNA in the 70S ribosome. This chain is Large ribosomal subunit protein uL2, found in Streptococcus suis (strain 98HAH33).